Consider the following 525-residue polypeptide: Nucleolar complex protein 4 homolog B (525 aa).

Residues 1 to 10 are compositionally biased toward basic residues; sequence MAARKAKHAF. Residues 1–21 are disordered; sequence MAARKAKHAFRSQATQSDAER. The next 3 helical transmembrane spans lie at 307-327, 358-378, and 386-406; these read AAYD…FILI, FFHL…LVAA, and LALT…CNLI.

This sequence belongs to the CBF/MAK21 family.

The protein resides in the nucleus membrane. The protein localises to the nucleus. It localises to the nucleolus. This is Nucleolar complex protein 4 homolog B (noc4l-b) from Xenopus laevis (African clawed frog).